The primary structure comprises 206 residues: Small ribosomal subunit protein uS4 (206 aa).

The S4 RNA-binding domain occupies 96–156 (TRLDNVVYRM…EKSQKQARIK (61 aa)).

This sequence belongs to the universal ribosomal protein uS4 family. As to quaternary structure, part of the 30S ribosomal subunit. Contacts protein S5. The interaction surface between S4 and S5 is involved in control of translational fidelity.

One of the primary rRNA binding proteins, it binds directly to 16S rRNA where it nucleates assembly of the body of the 30S subunit. Functionally, with S5 and S12 plays an important role in translational accuracy. The sequence is that of Small ribosomal subunit protein uS4 from Shewanella loihica (strain ATCC BAA-1088 / PV-4).